A 1488-amino-acid polypeptide reads, in one-letter code: Chromosome partition protein MukB (1488 aa).

34 to 41 (GGNGAGKS) lines the ATP pocket. 3 coiled-coil regions span residues 326–418 (LEAD…QYNQ), 444–472 (LDTF…QTAH), and 509–602 (RHLA…RRAP). The segment at 666–783 (PGGAEDQRLN…SLPIFGRAAR (118 aa)) is flexible hinge. Coiled-coil stretches lie at residues 835–923 (EAEI…AKLE), 977–1116 (EMLS…AKAG), and 1209–1265 (VEAI…LQSV). Residues 1049–1074 (ADSGAEERARQRRDELHAQLSNNRSR) are disordered. Basic and acidic residues predominate over residues 1051 to 1065 (SGAEERARQRRDELH).

The protein belongs to the SMC family. MukB subfamily. As to quaternary structure, homodimerization via its hinge domain. Binds to DNA via its C-terminal region. Interacts, and probably forms a ternary complex, with MukE and MukF via its C-terminal region. The complex formation is stimulated by calcium or magnesium. Interacts with tubulin-related protein FtsZ.

Its subcellular location is the cytoplasm. The protein localises to the nucleoid. Functionally, plays a central role in chromosome condensation, segregation and cell cycle progression. Functions as a homodimer, which is essential for chromosome partition. Involved in negative DNA supercoiling in vivo, and by this means organize and compact chromosomes. May achieve or facilitate chromosome segregation by condensation DNA from both sides of a centrally located replisome during cell division. The chain is Chromosome partition protein MukB from Salmonella heidelberg (strain SL476).